The following is a 387-amino-acid chain: Erythronate-4-phosphate dehydrogenase (387 aa).

Residues Ser45 and Thr67 each contribute to the substrate site. Asp147 provides a ligand contact to NAD(+). Arg208 is a catalytic residue. Asp232 serves as a coordination point for NAD(+). Glu237 is an active-site residue. The active-site Proton donor is His254. Gly257 is a binding site for NAD(+). Position 258 (Tyr258) interacts with substrate.

It belongs to the D-isomer specific 2-hydroxyacid dehydrogenase family. PdxB subfamily. Homodimer.

It is found in the cytoplasm. The catalysed reaction is 4-phospho-D-erythronate + NAD(+) = (R)-3-hydroxy-2-oxo-4-phosphooxybutanoate + NADH + H(+). It functions in the pathway cofactor biosynthesis; pyridoxine 5'-phosphate biosynthesis; pyridoxine 5'-phosphate from D-erythrose 4-phosphate: step 2/5. Functionally, catalyzes the oxidation of erythronate-4-phosphate to 3-hydroxy-2-oxo-4-phosphonooxybutanoate. This chain is Erythronate-4-phosphate dehydrogenase, found in Shewanella violacea (strain JCM 10179 / CIP 106290 / LMG 19151 / DSS12).